The sequence spans 215 residues: N-(5'-phosphoribosyl)anthranilate isomerase (215 aa).

It belongs to the TrpF family.

It carries out the reaction N-(5-phospho-beta-D-ribosyl)anthranilate = 1-(2-carboxyphenylamino)-1-deoxy-D-ribulose 5-phosphate. Its pathway is amino-acid biosynthesis; L-tryptophan biosynthesis; L-tryptophan from chorismate: step 3/5. In Paracoccus denitrificans (strain Pd 1222), this protein is N-(5'-phosphoribosyl)anthranilate isomerase.